The primary structure comprises 193 residues: Dense granule protein 2 (193 aa).

An N-linked (GlcNAc...) asparagine glycan is attached at Asn4. Residues 14-34 (FSPLTVVMLAVTLVAFMGVPL) traverse the membrane as a helical segment. An N-linked (GlcNAc...) asparagine glycan is attached at Asn74. Residues 75-140 (SSELAGSRDK…APKPVPVRSA (66 aa)) form a disordered region. Acidic residues predominate over residues 88 to 98 (EAEEEAAEVET). The chain crosses the membrane as a helical span at residues 153–173 (HRVIGTAVIAAVVAALLWKFS). The tract at residues 174–193 (RRRSGAPREGGENENGGEEK) is disordered.

It belongs to the Gra6 family.

The protein localises to the membrane. The polypeptide is Dense granule protein 2 (DG2) (Neospora caninum (Coccidian parasite)).